A 403-amino-acid polypeptide reads, in one-letter code: S-adenosylmethionine synthase (403 aa).

Residue H22 coordinates ATP. Residue D24 coordinates Mg(2+). E50 contributes to the K(+) binding site. 2 residues coordinate L-methionine: E63 and Q107. The segment at 107–117 is flexible loop; sequence QSPDIAMGVDK. ATP contacts are provided by residues 182–184, 248–249, D257, 263–264, A280, and K284; these read DAK, RF, and RK. D257 is an L-methionine binding site. Residue K288 coordinates L-methionine.

Belongs to the AdoMet synthase family. As to quaternary structure, homotetramer; dimer of dimers. It depends on Mg(2+) as a cofactor. K(+) is required as a cofactor.

It localises to the cytoplasm. It carries out the reaction L-methionine + ATP + H2O = S-adenosyl-L-methionine + phosphate + diphosphate. It functions in the pathway amino-acid biosynthesis; S-adenosyl-L-methionine biosynthesis; S-adenosyl-L-methionine from L-methionine: step 1/1. Its function is as follows. Catalyzes the formation of S-adenosylmethionine (AdoMet) from methionine and ATP. The overall synthetic reaction is composed of two sequential steps, AdoMet formation and the subsequent tripolyphosphate hydrolysis which occurs prior to release of AdoMet from the enzyme. This chain is S-adenosylmethionine synthase, found in Chloroflexus aurantiacus (strain ATCC 29366 / DSM 635 / J-10-fl).